The primary structure comprises 130 residues: Ribonuclease P protein component (130 aa).

It belongs to the RnpA family. As to quaternary structure, consists of a catalytic RNA component (M1 or rnpB) and a protein subunit.

It carries out the reaction Endonucleolytic cleavage of RNA, removing 5'-extranucleotides from tRNA precursor.. RNaseP catalyzes the removal of the 5'-leader sequence from pre-tRNA to produce the mature 5'-terminus. It can also cleave other RNA substrates such as 4.5S RNA. The protein component plays an auxiliary but essential role in vivo by binding to the 5'-leader sequence and broadening the substrate specificity of the ribozyme. The chain is Ribonuclease P protein component from Desulfovibrio desulfuricans (strain ATCC 27774 / DSM 6949 / MB).